A 384-amino-acid polypeptide reads, in one-letter code: Mannitol-1-phosphate 5-dehydrogenase (384 aa).

4–15 (AVHFGAGNIGRG) serves as a coordination point for NAD(+).

This sequence belongs to the mannitol dehydrogenase family.

It catalyses the reaction D-mannitol 1-phosphate + NAD(+) = beta-D-fructose 6-phosphate + NADH + H(+). The sequence is that of Mannitol-1-phosphate 5-dehydrogenase from Lacticaseibacillus paracasei (strain ATCC 334 / BCRC 17002 / CCUG 31169 / CIP 107868 / KCTC 3260 / NRRL B-441) (Lactobacillus paracasei).